Here is a 52-residue protein sequence, read N- to C-terminus: Large ribosomal subunit protein bL32c (52 aa).

The protein belongs to the bacterial ribosomal protein bL32 family.

Its subcellular location is the plastid. The protein localises to the chloroplast. This is Large ribosomal subunit protein bL32c from Citrus sinensis (Sweet orange).